The sequence spans 853 residues: Bromodomain-containing protein bet-1 (853 aa).

Polar residues predominate over residues 1–19 (MSEGSGDQSQQRPWASPRQ). Disordered regions lie at residues 1–22 (MSEG…QQPI) and 141–245 (SLEQ…LRAK). The Bromo 1 domain maps to 39 to 145 (RHTNKLDYIM…EVIKKSLEQA (107 aa)). Over residues 141-153 (SLEQAPREEHDMD) the composition is skewed to basic and acidic residues. Composition is skewed to low complexity over residues 166-175 (SDGGSKSSSS) and 192-215 (SEVS…SVAA). Residue lysine 252 forms a Glycyl lysine isopeptide (Lys-Gly) (interchain with G-Cter in SUMO) linkage. In terms of domain architecture, Bromo 2 spans 257-366 (QPLLPSMKPC…EVFDRRWAEL (110 aa)). Positions 369-381 (SSSRASSVAPQSA) are enriched in low complexity. Residues 369–418 (SSSRASSVAPQSAPIAPTPKVAKSSAPKEPKESRKEHKKETTFEASGAKS) form a disordered region. Residues 394-410 (APKEPKESRKEHKKETT) are compositionally biased toward basic and acidic residues. Residues 419–458 (EDLMQINNALSMIREREEKLKAELAAAQAIKDKLTSVKNR) adopt a coiled-coil conformation. The NET domain maps to 516–601 (DSDDEDNKMA…TIPTLNGNGD (86 aa)). Disordered stretches follow at residues 594-814 (PTLN…DEQT) and 819-838 (MRME…VSLS). The segment covering 612–624 (TSSGATGSKGSSS) has biased composition (low complexity). A compositionally biased stretch (polar residues) spans 684-696 (QPPSTSREWNQSS). Residues 708-736 (QPPMSRVPASSSTSVSAIGKNNAAASSNS) are compositionally biased toward low complexity. Positions 786-807 (QFFQSQPTTSATIRSPTESQPG) are enriched in polar residues. Residues 819–832 (MRMEAKRARQKEDE) are compositionally biased toward basic and acidic residues.

The protein belongs to the BET family. In terms of assembly, interacts with acetylated histone H4. Interacts (via BROMO domain 2) with smo-1 and ubc-9. Expressed in T-cells, Q-cells, V5-cells and their descendants such as somatic gonad and syncytium.

The protein localises to the nucleus. The protein resides in the chromosome. Functionally, required for the establishment and maintenance of stable cell fate in several lineages including V5.pa, T, Z1/Z4 and QR lineages probably by repressing the expression of cell fate determinants. Required to maintain non-distal tip cell (DTC) fate of somatic gonadal cells through the htz-1-mediated repression of transcription factor ceh-22. Regulates the subnuclear localization of histone variant htz-1 in somatic gonadal cells. Plays a role in the attenuation of the let-60/ras pathway, probably by preventing expression of activators of the pathway. Involved in adult locomotion. Acts together with the sumoylation pathway to prevent muscle myosin depletion in aging adults probably by preventing myoblast growth factor receptor egl-15 overexpression. May play a role in vulva development. This Caenorhabditis elegans protein is Bromodomain-containing protein bet-1.